The chain runs to 287 residues: Type 1 encapsulin shell protein EncA (287 aa).

It belongs to the encapsulin family. Family 1 subfamily. In terms of assembly, the 32 nm encapsulin nanocompartment is formed by 180 subunits; monomers form pentamers which assemble to form shells. There are 36 pores where the pentamers meet as well as 3-fold axis channels and dimer channels. The N-terminus of the protein is inside the shell.

It is found in the encapsulin nanocompartment. In terms of biological role, shell component of a type 1, iron-storage encapsulin nanocompartment. Encapsulin nanocompartments are 32 nm in diameter with an iron- and phosphorus-rich core (4Fe:1P) about 24 nm in diameter. Upon expression in E.coli most particles are 32 nm, 20% are 18 nm. The core is filled with an average of 14 dense granules, 5-6 nm in diameter that are not evenly distributed. Each nanocompartment is estimated to hold 30,000-35,000 Fe atoms. The minor proteins EncB, EncC and EncD probably lie against the interior face of the nanocompartment. This chain is Type 1 encapsulin shell protein EncA, found in Myxococcus xanthus (strain DK1622).